The chain runs to 393 residues: PPE family protein PPE26 (393 aa).

This sequence belongs to the mycobacterial PPE family. In terms of assembly, interacts with human TLR2.

In terms of biological role, probably plays a key role in regulating innate and adaptive immune responses through human Toll-like receptor 2 (TLR2). Interacts with TLR2, leading to the subsequent activation of the mitogen-activated protein kinase (MAPK) and nuclear factor kappa B (NF-kappa-B) signaling pathways. Stimulates macrophage activation by augmenting pro-inflammatory cytokine production (TNF-alpha, IL-6 and IL-12p40) and the expression of cell surface molecules (CD80, CD86, MHC class I and II). Also participates in adaptive immunity by directing Th1-polarised immune responses. The polypeptide is PPE family protein PPE26 (Mycobacterium tuberculosis (strain ATCC 25618 / H37Rv)).